The sequence spans 329 residues: Carrier protein YMC2, mitochondrial (329 aa).

The disordered stretch occupies residues 1-27 (MSEEFPTPQLLDELEDQQKVTTPNEKR). A mitochondrion-targeting transit peptide spans 1 to 33 (MSEEFPTPQLLDELEDQQKVTTPNEKRELSSNR). Solcar repeat units follow at residues 34-115 (VLKD…MKRF), 143-226 (SQYY…LVAR), and 238-325 (PPWK…VMRF). A run of 6 helical transmembrane segments spans residues 38–58 (IFAG…FDTT), 84–104 (VFAF…CVSV), 140–160 (LPLS…SFLA), 205–225 (TMIR…ALVA), 243–263 (CLFG…LDVV), and 297–318 (FFKG…TFLT).

Belongs to the mitochondrial carrier (TC 2.A.29) family.

The protein resides in the mitochondrion inner membrane. In Saccharomyces cerevisiae (strain ATCC 204508 / S288c) (Baker's yeast), this protein is Carrier protein YMC2, mitochondrial (YMC2).